The following is a 178-amino-acid chain: uncharacterized protein (178 aa).

A helical membrane pass occupies residues 7–29 (FFVIFSILWGSLFLFSIIGSLGT).

It is found in the membrane. This is an uncharacterized protein from Bacillus subtilis (strain 168).